The chain runs to 520 residues: 4-hydroxyphenylacetate 3-monooxygenase oxygenase component (520 aa).

It belongs to the FADH(2)-utilizing monooxygenase family. 4-HPA 3-monooxygenase consists of a reductase component HpaC and an oxygenase component HpaB.

The catalysed reaction is 4-hydroxyphenylacetate + FADH2 + O2 = 3,4-dihydroxyphenylacetate + FAD + H2O + H(+). The protein operates within aromatic compound metabolism; 4-hydroxyphenylacetate degradation; pyruvate and succinate semialdehyde from 4-hydroxyphenylacetate: step 1/7. Functionally, utilizes FADH(2) supplied by HpaC or by another flavin reductase, to catalyze the hydroxylation of 4-hydroxyphenylacetic acid, leading to the production of 3,4-DHPA. Can also oxidize phenol to catechol, and hydroxylate other phenol derivatives. This Escherichia coli protein is 4-hydroxyphenylacetate 3-monooxygenase oxygenase component (hpaB).